A 265-amino-acid polypeptide reads, in one-letter code: Transcription factor LBX1b (265 aa).

A DNA-binding region (homeobox) is located at residues 121-180; the sequence is RRKSRTAFTNHQLYELEKRFLHQKYLSPADRDQIAHQLGLTNAQVITWFQNRRAKLKRDL.

It localises to the nucleus. Transcription factor required for the development of hypaxial muscles. The polypeptide is Transcription factor LBX1b (Danio rerio (Zebrafish)).